Consider the following 71-residue polypeptide: Conotoxin De13.1 (71 aa).

Positions 1 to 19 (MSGMGVLLLVLLLVMPLAA) are cleaved as a signal peptide. The propeptide occupies 20–35 (FHQDGEGEATRRSGGL). 2 positions are modified to 4-hydroxyproline: P40 and P44. Residue W51 is modified to 6'-bromotryptophan. At E52 the chain carries 4-carboxyglutamate. The residue at position 55 (K55) is a 5-hydroxylysine. 4-hydroxyproline is present on P58. Position 69 is a histidine amide (H69).

The protein belongs to the conotoxin G superfamily. Post-translationally, contains 4 disulfide bonds. In terms of tissue distribution, expressed by the venom duct.

Its subcellular location is the secreted. The chain is Conotoxin De13.1 from Conasprella delessertii (Sozon's cone).